Consider the following 559-residue polypeptide: Glucose-6-phosphate isomerase (559 aa).

Glutamate 352 functions as the Proton donor in the catalytic mechanism. Residues histidine 383 and lysine 511 contribute to the active site.

It belongs to the GPI family.

It localises to the cytoplasm. It catalyses the reaction alpha-D-glucose 6-phosphate = beta-D-fructose 6-phosphate. It participates in carbohydrate biosynthesis; gluconeogenesis. It functions in the pathway carbohydrate degradation; glycolysis; D-glyceraldehyde 3-phosphate and glycerone phosphate from D-glucose: step 2/4. Functionally, catalyzes the reversible isomerization of glucose-6-phosphate to fructose-6-phosphate. This is Glucose-6-phosphate isomerase from Chlorobaculum tepidum (strain ATCC 49652 / DSM 12025 / NBRC 103806 / TLS) (Chlorobium tepidum).